We begin with the raw amino-acid sequence, 272 residues long: PILR alpha-associated neural protein (272 aa).

An N-terminal signal peptide occupies residues 1–27 (MWPAQLLSQLLPLWPLLLLPLSLPAQG). A disordered region spans residues 25–93 (AQGSSHRSPP…PSGFEEGPPS (69 aa)). Topologically, residues 28–174 (SSHRSPPAPA…FGGRGEGVDP (147 aa)) are extracellular. Thr-136 carries an O-linked (GalNAc...) threonine glycan. The chain crosses the membrane as a helical span at residues 175 to 195 (QLYVTITISIIIVLVATGIIF). Over 196–272 (KFCWDRSQKR…KGAPAFQLNR (77 aa)) the chain is Cytoplasmic. The interval 205–272 (RRRPSGQQGA…KGAPAFQLNR (68 aa)) is disordered. Positions 209-225 (SGQQGALRQEESQQPLT) are enriched in polar residues.

O-glycosylation at Thr-136 is essential for recognition by PILRA.

It localises to the membrane. Acts as a ligand for PILRA in neuronal tissues, where it may be involved in immune regulation. The polypeptide is PILR alpha-associated neural protein (Pianp) (Rattus norvegicus (Rat)).